A 349-amino-acid chain; its full sequence is N-acetyltaurine hydrolase (349 aa).

6 residues coordinate a divalent metal cation: His26, His28, Glu169, His201, His230, and Asp298.

Belongs to the metallo-dependent hydrolases superfamily. Phosphotriesterase family. A divalent metal cation serves as cofactor.

It localises to the cytoplasm. Its subcellular location is the cytosol. The enzyme catalyses N-acetyltaurine + H2O = taurine + acetate. It carries out the reaction N-propanoyltaurine + H2O = propanoate + taurine. The catalysed reaction is N-acetyl-L-methionine + H2O = L-methionine + acetate. It catalyses the reaction N-acetyl-L-isoleucine + H2O = L-isoleucine + acetate. The enzyme catalyses N-acetyl-L-leucine + H2O = L-leucine + acetate. It carries out the reaction N-acetyl-L-valine + H2O = L-valine + acetate. In terms of biological role, N-acetyltaurine hydrolase that regulates feeding by catalyzing the hydrolysis of N-acetyltaurine into taurine and acetate. N-acetyltaurine has anorexigenic and anti-obesity effects that are dependent on GFRAL receptor and GDF15. PTER also acts on other N-acetyl amino acids (Met, Ile, Leu, Val) and N-propionyltaurine, but at lower rates. This chain is N-acetyltaurine hydrolase (PTER), found in Bos taurus (Bovine).